The sequence spans 421 residues: Testin (421 aa).

The PET domain maps to 92 to 199 (MILTNPVAAK…GDVKLPCEMD (108 aa)). The segment at 133–164 (EKQPVAGSEGAQYRKKQLAKQLPAHDQDPSKC) is disordered. Basic and acidic residues predominate over residues 155–164 (PAHDQDPSKC). LIM zinc-binding domains follow at residues 234-297 (YSCY…CDSE), 299-359 (PRCA…NHAV), and 362-421 (QGCH…KMMS).

This sequence belongs to the prickle / espinas / testin family. Interacts via LIM domain 1 with ZYX. Interacts (via LIM domain 3) with ENAH and VASP. Interacts with ALKBH4, talin, actin, alpha-actinin, GRIP1 and PXN. Interacts (via LIM domain 2) with ACTL7A (via N-terminus). Heterodimer with ACTL7A; the heterodimer interacts with ENAH to form a heterotrimer.

Its subcellular location is the cytoplasm. The protein resides in the cell junction. It localises to the focal adhesion. Functionally, scaffold protein that may play a role in cell adhesion, cell spreading and in the reorganization of the actin cytoskeleton. Plays a role in the regulation of cell proliferation. May act as a tumor suppressor. The protein is Testin (TES) of Callithrix jacchus (White-tufted-ear marmoset).